The following is an 87-amino-acid chain: MAKGQSLQDPFLNALRRERIPVSIYLVNGIKLQGQIESFDQFVILLKNTVNQMVYKHAISTVVPARPVSHHSGDRPASDRPAEKSEE.

Residues 9–68 (DPFLNALRRERIPVSIYLVNGIKLQGQIESFDQFVILLKNTVNQMVYKHAISTVVPARPV) form the Sm domain. The segment at 65-87 (ARPVSHHSGDRPASDRPAEKSEE) is disordered. Positions 71–87 (HSGDRPASDRPAEKSEE) are enriched in basic and acidic residues.

Belongs to the Hfq family.

Its function is as follows. RNA chaperone that binds small regulatory RNA (sRNAs) and mRNAs to facilitate mRNA translational regulation in response to envelope stress, environmental stress and changes in metabolite concentrations. Also binds with high specificity to tRNAs. Essential for virulence in the suckling mouse model of cholera pathogenesis. The polypeptide is RNA-binding protein Hfq (Vibrio cholerae serotype O1 (strain ATCC 39315 / El Tor Inaba N16961)).